The sequence spans 524 residues: Na(+)/H(+) antiporter NhaB (524 aa).

Transmembrane regions (helical) follow at residues 13 to 33 (FLGN…IINP), 98 to 118 (LLLV…LFVF), 140 to 160 (AFLS…SVSV), 239 to 259 (FFIR…LVCL), 304 to 324 (AIIG…VGLV), 325 to 345 (GLSV…HSLG), 358 to 378 (LTVF…TPII), 448 to 468 (ATPN…APLI), and 479 to 499 (ALPY…FLLV).

This sequence belongs to the NhaB Na(+)/H(+) (TC 2.A.34) antiporter family.

The protein localises to the cell inner membrane. The catalysed reaction is 2 Na(+)(in) + 3 H(+)(out) = 2 Na(+)(out) + 3 H(+)(in). Na(+)/H(+) antiporter that extrudes sodium in exchange for external protons. In Yersinia pestis (strain Pestoides F), this protein is Na(+)/H(+) antiporter NhaB.